A 399-amino-acid polypeptide reads, in one-letter code: Ornithine aminotransferase (399 aa).

The residue at position 255 (lysine 255) is an N6-(pyridoxal phosphate)lysine.

The protein belongs to the class-III pyridoxal-phosphate-dependent aminotransferase family. OAT subfamily. The cofactor is pyridoxal 5'-phosphate.

The protein resides in the cytoplasm. The enzyme catalyses a 2-oxocarboxylate + L-ornithine = L-glutamate 5-semialdehyde + an L-alpha-amino acid. The protein operates within amino-acid biosynthesis; L-proline biosynthesis; L-glutamate 5-semialdehyde from L-ornithine: step 1/1. Catalyzes the interconversion of ornithine to glutamate semialdehyde. The chain is Ornithine aminotransferase from Brevibacillus brevis (strain 47 / JCM 6285 / NBRC 100599).